The primary structure comprises 155 residues: Mediator of RNA polymerase II transcription subunit 21 (155 aa).

Positions 29–73 are disordered; it reads QAPPSVPPGQHRVDTMPEIKGKAASENPQSNPPQPAEPPVPEKIS. Over residues 39-51 the composition is skewed to basic and acidic residues; that stretch reads HRVDTMPEIKGKA. A compositionally biased stretch (pro residues) spans 58 to 69; that stretch reads SNPPQPAEPPVP. Residues 75-147 are a coiled coil; it reads EQFNQDLKEF…EVLLKKVEDK (73 aa).

Belongs to the Mediator complex subunit 21 family. As to quaternary structure, component of the Mediator complex.

Its subcellular location is the nucleus. Functionally, component of the Mediator complex, a coactivator involved in the regulated transcription of nearly all RNA polymerase II-dependent genes. Mediator functions as a bridge to convey information from gene-specific regulatory proteins to the basal RNA polymerase II transcription machinery. Mediator is recruited to promoters by direct interactions with regulatory proteins and serves as a scaffold for the assembly of a functional preinitiation complex with RNA polymerase II and the general transcription factors. The protein is Mediator of RNA polymerase II transcription subunit 21 (SRB7) of Phaeosphaeria nodorum (strain SN15 / ATCC MYA-4574 / FGSC 10173) (Glume blotch fungus).